Here is a 431-residue protein sequence, read N- to C-terminus: tRNA(Ile)-lysidine synthase (431 aa).

19–24 (STGIDS) is a binding site for ATP.

Belongs to the tRNA(Ile)-lysidine synthase family.

The protein resides in the cytoplasm. It carries out the reaction cytidine(34) in tRNA(Ile2) + L-lysine + ATP = lysidine(34) in tRNA(Ile2) + AMP + diphosphate + H(+). Ligates lysine onto the cytidine present at position 34 of the AUA codon-specific tRNA(Ile) that contains the anticodon CAU, in an ATP-dependent manner. Cytidine is converted to lysidine, thus changing the amino acid specificity of the tRNA from methionine to isoleucine. The protein is tRNA(Ile)-lysidine synthase of Staphylococcus aureus (strain COL).